The sequence spans 335 residues: Epidermal differentiation-specific protein (335 aa).

4 Beta/gamma crystallin 'Greek key' domains span residues 2 to 42 (NTIT…KIVG), 43 to 81 (QPWI…RLIT), 87 to 126 (PQIT…RVQR), and 127 to 169 (GAWA…YPLR).

The protein belongs to the beta/gamma-crystallin family. Epidermis specific.

The protein is Epidermal differentiation-specific protein of Cynops pyrrhogaster (Japanese fire-bellied newt).